We begin with the raw amino-acid sequence, 306 residues long: Cysteine synthase (306 aa).

Lys-46 carries the N6-(pyridoxal phosphate)lysine modification. Residues Asn-76, 180–184 (GSGGT), and Ser-267 contribute to the pyridoxal 5'-phosphate site.

This sequence belongs to the cysteine synthase/cystathionine beta-synthase family. As to quaternary structure, homodimer. Requires pyridoxal 5'-phosphate as cofactor.

It catalyses the reaction O-acetyl-L-serine + hydrogen sulfide = L-cysteine + acetate. Its pathway is amino-acid biosynthesis; L-cysteine biosynthesis; L-cysteine from L-serine: step 2/2. In Helicobacter pylori (strain ATCC 700392 / 26695) (Campylobacter pylori), this protein is Cysteine synthase (cysM).